A 70-amino-acid polypeptide reads, in one-letter code: Large ribosomal subunit protein uL29 (70 aa).

It belongs to the universal ribosomal protein uL29 family.

This Clostridium botulinum (strain Alaska E43 / Type E3) protein is Large ribosomal subunit protein uL29.